Reading from the N-terminus, the 320-residue chain is Malate dehydrogenase (320 aa).

Residues 10–15 and Asp34 each bind NAD(+); that span reads GSGMIG. Substrate is bound by residues Arg83 and Arg89. NAD(+)-binding positions include Asn96 and 119–121; that span reads ITN. The substrate site is built by Asn121 and Arg152. His176 serves as the catalytic Proton acceptor.

Belongs to the LDH/MDH superfamily. MDH type 3 family.

It catalyses the reaction (S)-malate + NAD(+) = oxaloacetate + NADH + H(+). Functionally, catalyzes the reversible oxidation of malate to oxaloacetate. The chain is Malate dehydrogenase from Bartonella henselae (strain ATCC 49882 / DSM 28221 / CCUG 30454 / Houston 1) (Rochalimaea henselae).